The sequence spans 236 residues: UPF0257 lipoprotein YnfC (236 aa).

Residues 1–16 form the signal peptide; that stretch reads MKYKLLPCLLAILLTG. Cysteine 17 carries N-palmitoyl cysteine lipidation. Residue cysteine 17 is the site of S-diacylglycerol cysteine attachment.

It belongs to the UPF0257 family.

It localises to the cell membrane. The sequence is that of UPF0257 lipoprotein YnfC from Escherichia coli O81 (strain ED1a).